The primary structure comprises 70 residues: Conotoxin AbVIC (70 aa).

Residues 1–17 (VLIIAVLFLTACQLTTA) form the signal peptide. Residues 18 to 41 (ETSSRGKQKHRALRSTDKNSKLTR) constitute a propeptide that is removed on maturation. Residues 19-41 (TSSRGKQKHRALRSTDKNSKLTR) form a disordered region. Intrachain disulfides connect C43/C57, C50/C61, and C56/C68.

Belongs to the conotoxin O1 superfamily. In terms of tissue distribution, expressed by the venom duct.

The protein resides in the secreted. This is Conotoxin AbVIC from Conus abbreviatus (Abbreviated cone).